We begin with the raw amino-acid sequence, 245 residues long: 14-3-3 protein zeta/delta (245 aa).

Position 1 is an N-acetylmethionine (Met-1). At Lys-3 the chain carries N6-acetyllysine. Ser-58 is modified (phosphoserine; by PKA). An N6-acetyllysine modification is found at Lys-68. 3 positions are modified to phosphoserine: Ser-184, Ser-207, and Ser-210. Thr-232 is subject to Phosphothreonine; by CK1.

This sequence belongs to the 14-3-3 family. As to quaternary structure, interacts with CDK16 and BSPRY. Interacts with WEE1 (C-terminal). Interacts with SAMSN1. Interacts with MLF1 (phosphorylated form); the interaction retains it in the cytoplasm. Interacts with Thr-phosphorylated ITGB2. Interacts with BCL2L11. Homodimer. Heterodimerizes with YWHAE. Homo- and heterodimerization is inhibited by phosphorylation on Ser-58. Interacts with FOXO4, NOXA1, SSH1 and ARHGEF2. Interacts with Pseudomonas aeruginosa exoS (unphosphorylated form). Interacts with BAX; the interaction occurs in the cytoplasm. Under stress conditions, MAPK8-mediated phosphorylation releases BAX to mitochondria. Interacts with phosphorylated RAF1; the interaction is inhibited when YWHAZ is phosphorylated on Thr-232. Interacts with TP53; the interaction enhances p53 transcriptional activity. The Ser-58 phosphorylated form inhibits this interaction and p53 transcriptional activity. Interacts with ABL1 (phosphorylated form); the interaction retains ABL1 in the cytoplasm. Interacts with PKA-phosphorylated AANAT; the interaction modulates AANAT enzymatic activity by increasing affinity for arylalkylamines and acetyl-CoA and protecting the enzyme from dephosphorylation and proteasomal degradation. It may also prevent thiol-dependent inactivation. Interacts with AKT1; the interaction phosphorylates YWHAZ and modulates dimerization. Interacts with GAB2 and TLK2. Interacts with the 'Thr-369' phosphorylated form of DAPK2. Interacts with PI4KB, TBC1D22A and TBC1D22B. Interacts with ZFP36L1 (via phosphorylated form); this interaction occurs in a p38 MAPK- and AKT-signaling pathways. Interacts with SLITRK1. Interacts with AK5, LDB1, MADD, MARK3, PDE1A and SMARCB1. Interacts with YWHAZ. Interacts with MEFV. Interacts with ADAM22 (via C-terminus). The delta, brain-specific form differs from the zeta form in being phosphorylated. Phosphorylation on Ser-184 by MAPK8; promotes dissociation of BAX and translocation of BAX to mitochondria. Phosphorylation on Thr-232; inhibits binding of RAF1. Phosphorylated on Ser-58 by PKA and protein kinase C delta type catalytic subunit in a sphingosine-dependent fashion. Phosphorylation on Ser-58 by PKA; disrupts homodimerization and heterodimerization with YHAE and TP53. Highly expressed in brain (at protein level).

Its subcellular location is the cytoplasm. The protein localises to the melanosome. Adapter protein implicated in the regulation of a large spectrum of both general and specialized signaling pathways. Binds to a large number of partners, usually by recognition of a phosphoserine or phosphothreonine motif. Binding generally results in the modulation of the activity of the binding partner. Promotes cytosolic retention and inactivation of TFEB transcription factor by binding to phosphorylated TFEB. Induces ARHGEF7 activity on RAC1 as well as lamellipodia and membrane ruffle formation. In neurons, regulates spine maturation through the modulation of ARHGEF7 activity. The chain is 14-3-3 protein zeta/delta (YWHAZ) from Ovis aries (Sheep).